Here is a 217-residue protein sequence, read N- to C-terminus: Small ribosomal subunit protein uS3 (217 aa).

The region spanning 38-106 is the KH type-2 domain; the sequence is IRKFINKELA…QVHINIIEIK (69 aa).

Belongs to the universal ribosomal protein uS3 family. As to quaternary structure, part of the 30S ribosomal subunit. Forms a tight complex with proteins S10 and S14.

Binds the lower part of the 30S subunit head. Binds mRNA in the 70S ribosome, positioning it for translation. This chain is Small ribosomal subunit protein uS3, found in Streptococcus equi subsp. equi (strain 4047).